A 1337-amino-acid polypeptide reads, in one-letter code: Rho GTPase-activating protein 29 (1337 aa).

Over residues 1–13 the composition is skewed to polar residues; it reads MFRQGSNSGNKRM. Disordered regions lie at residues 1-20, 369-397, 513-551, and 564-654; these read MFRQGSNSGNKRMTSGARLS, REEYEKARSSTSRTEEEQPAAGGRTLEKK, SSKTGMSLHKRSQNSTRSSHGNLSQGSATSMDNHSADEV, and ERRS…TGLS. The region spanning 225-488 is the F-BAR domain; that stretch reads EQVDLLLLKN…QAKKYEPGQR (264 aa). The stretch at 326 to 443 forms a coiled coil; sequence LLARKNDLDK…SEILAQIRKL (118 aa). Over residues 369–384 the composition is skewed to basic and acidic residues; that stretch reads REEYEKARSSTSRTEE. 2 stretches are compositionally biased toward polar residues: residues 525 to 545 and 568 to 579; these read QNSTRSSHGNLSQGSATSMDN and NSSIDMQVPRTQ. Low complexity predominate over residues 596–613; it reads CSDSESAGGSSESRSMDS. The segment at 676–723 adopts a Phorbol-ester/DAG-type zinc-finger fold; sequence AHTHKLRKLRAPSKCRECDSLVVFHGAECEECSLACHKKCLETLAIQC. The Rho-GAP domain occupies 737–950; that stretch reads IDFAQVVKNS…LLIKHHQMIF (214 aa). A compositionally biased stretch (polar residues) spans 960–973; it reads TSPTVSQASFGSSI. 5 disordered regions span residues 960-983, 1016-1066, 1083-1114, 1149-1210, and 1273-1337; these read TSPTVSQASFGSSIQDKESKLSRH, MKTG…AKPV, SRNTVEHDHSPAAIEETTEPEKPTTPRHTNFY, PPSG…KPSD, and TVSR…AHFV. Residues 974-983 are compositionally biased toward basic and acidic residues; the sequence is QDKESKLSRH. Over residues 1083–1092 the composition is skewed to basic and acidic residues; it reads SRNTVEHDHS. Composition is skewed to polar residues over residues 1161–1177 and 1295–1310; these read MASQSSTSRKDGTSQSG and VTLSPPQSPGSSTEEL. Over residues 1325-1337 the composition is skewed to basic and acidic residues; that stretch reads RMQELEHREAHFV.

In terms of biological role, GTPase activator for the Rho-type GTPases by converting them to an inactive GDP-bound state. Has strong activity toward RHOA, and weaker activity toward RAC1 and CDC42. The chain is Rho GTPase-activating protein 29 (arhgap29) from Danio rerio (Zebrafish).